The chain runs to 261 residues: Cytochrome c oxidase subunit 3 (261 aa).

The Mitochondrial matrix segment spans residues 1–15 (MTHQTHAYHTVNPSP). The helical transmembrane segment at 16–34 (WPLTGALSALLMTSGLIMW) threads the bilayer. Over 35 to 40 (FHFNSP) the chain is Mitochondrial intermembrane. The chain crosses the membrane as a helical span at residues 41–66 (LLLVLGLTTNFLTMYQWWRDIIREST). Residues 67-72 (FQGHHT) lie on the Mitochondrial matrix side of the membrane. Residues 73 to 105 (TIVQKGLRYGMILFIVSEVFFFAGFFWAFYHSS) traverse the membrane as a helical segment. At 106-128 (LAPTPELGGCWPPTGINPLNPLE) the chain is on the mitochondrial intermembrane side. The chain crosses the membrane as a helical span at residues 129–152 (VPLLNTSVLLASGVSITWAHHSLM). Residues 153–155 (EGH) lie on the Mitochondrial matrix side of the membrane. A helical transmembrane segment spans residues 156 to 183 (RKHMLQALFITIALGVYFTLLQASEYYE). The Mitochondrial intermembrane portion of the chain corresponds to 184–190 (APFTISD). Residues 191–223 (GIYGSTFFVATGFHGLHVIIGSSFLIVCFMRQL) form a helical membrane-spanning segment. At 224–232 (KFHFTSSHH) the chain is on the mitochondrial matrix side. The helical transmembrane segment at 233 to 256 (FGFEAAAWYWHFVDVVWLFLYVSI) threads the bilayer. Topologically, residues 257-261 (YWWGS) are mitochondrial intermembrane.

This sequence belongs to the cytochrome c oxidase subunit 3 family. In terms of assembly, component of the cytochrome c oxidase (complex IV, CIV), a multisubunit enzyme composed of 14 subunits. The complex is composed of a catalytic core of 3 subunits MT-CO1, MT-CO2 and MT-CO3, encoded in the mitochondrial DNA, and 11 supernumerary subunits COX4I, COX5A, COX5B, COX6A, COX6B, COX6C, COX7A, COX7B, COX7C, COX8 and NDUFA4, which are encoded in the nuclear genome. The complex exists as a monomer or a dimer and forms supercomplexes (SCs) in the inner mitochondrial membrane with NADH-ubiquinone oxidoreductase (complex I, CI) and ubiquinol-cytochrome c oxidoreductase (cytochrome b-c1 complex, complex III, CIII), resulting in different assemblies (supercomplex SCI(1)III(2)IV(1) and megacomplex MCI(2)III(2)IV(2)).

The protein resides in the mitochondrion inner membrane. The enzyme catalyses 4 Fe(II)-[cytochrome c] + O2 + 8 H(+)(in) = 4 Fe(III)-[cytochrome c] + 2 H2O + 4 H(+)(out). In terms of biological role, component of the cytochrome c oxidase, the last enzyme in the mitochondrial electron transport chain which drives oxidative phosphorylation. The respiratory chain contains 3 multisubunit complexes succinate dehydrogenase (complex II, CII), ubiquinol-cytochrome c oxidoreductase (cytochrome b-c1 complex, complex III, CIII) and cytochrome c oxidase (complex IV, CIV), that cooperate to transfer electrons derived from NADH and succinate to molecular oxygen, creating an electrochemical gradient over the inner membrane that drives transmembrane transport and the ATP synthase. Cytochrome c oxidase is the component of the respiratory chain that catalyzes the reduction of oxygen to water. Electrons originating from reduced cytochrome c in the intermembrane space (IMS) are transferred via the dinuclear copper A center (CU(A)) of subunit 2 and heme A of subunit 1 to the active site in subunit 1, a binuclear center (BNC) formed by heme A3 and copper B (CU(B)). The BNC reduces molecular oxygen to 2 water molecules using 4 electrons from cytochrome c in the IMS and 4 protons from the mitochondrial matrix. The protein is Cytochrome c oxidase subunit 3 (MT-CO3) of Dasypus novemcinctus (Nine-banded armadillo).